Reading from the N-terminus, the 414-residue chain is Serine hydroxymethyltransferase (414 aa).

(6S)-5,6,7,8-tetrahydrofolate-binding positions include L121 and 125–127; that span reads GHL. K229 is subject to N6-(pyridoxal phosphate)lysine.

It belongs to the SHMT family. Homodimer. The cofactor is pyridoxal 5'-phosphate.

The protein localises to the cytoplasm. The catalysed reaction is (6R)-5,10-methylene-5,6,7,8-tetrahydrofolate + glycine + H2O = (6S)-5,6,7,8-tetrahydrofolate + L-serine. Its pathway is one-carbon metabolism; tetrahydrofolate interconversion. It participates in amino-acid biosynthesis; glycine biosynthesis; glycine from L-serine: step 1/1. Functionally, catalyzes the reversible interconversion of serine and glycine with tetrahydrofolate (THF) serving as the one-carbon carrier. This reaction serves as the major source of one-carbon groups required for the biosynthesis of purines, thymidylate, methionine, and other important biomolecules. Also exhibits THF-independent aldolase activity toward beta-hydroxyamino acids, producing glycine and aldehydes, via a retro-aldol mechanism. This is Serine hydroxymethyltransferase from Variovorax paradoxus (strain S110).